A 259-amino-acid polypeptide reads, in one-letter code: Zinc import ATP-binding protein ZnuC (259 aa).

An ABC transporter domain is found at 11–225 (IRLENIYVHR…PEYLAIFGGQ (215 aa)). Residue 43–50 (GPNGAGKS) participates in ATP binding.

The protein belongs to the ABC transporter superfamily. Zinc importer (TC 3.A.1.15.5) family. The complex is composed of two ATP-binding proteins (ZnuC), two transmembrane proteins (ZnuB) and a solute-binding protein (ZnuA).

It localises to the cell inner membrane. It catalyses the reaction Zn(2+)(out) + ATP(in) + H2O(in) = Zn(2+)(in) + ADP(in) + phosphate(in) + H(+)(in). Functionally, part of the ABC transporter complex ZnuABC involved in zinc import. Responsible for energy coupling to the transport system. The chain is Zinc import ATP-binding protein ZnuC from Acinetobacter baylyi (strain ATCC 33305 / BD413 / ADP1).